Reading from the N-terminus, the 135-residue chain is Protein PsiE homolog (135 aa).

The next 4 membrane-spanning stretches (helical) occupy residues 14 to 34 (LQTI…IFLV), 54 to 74 (YQLI…ALIV), 82 to 102 (HFPL…LIIV), and 107 to 127 (PSDT…LYLA).

This sequence belongs to the PsiE family.

It localises to the cell inner membrane. This chain is Protein PsiE homolog, found in Pectobacterium atrosepticum (strain SCRI 1043 / ATCC BAA-672) (Erwinia carotovora subsp. atroseptica).